The following is a 341-amino-acid chain: Tetraacyldisaccharide 4'-kinase (341 aa).

54–61 (TVGGAGKT) lines the ATP pocket.

It belongs to the LpxK family.

It catalyses the reaction a lipid A disaccharide + ATP = a lipid IVA + ADP + H(+). It functions in the pathway glycolipid biosynthesis; lipid IV(A) biosynthesis; lipid IV(A) from (3R)-3-hydroxytetradecanoyl-[acyl-carrier-protein] and UDP-N-acetyl-alpha-D-glucosamine: step 6/6. Its function is as follows. Transfers the gamma-phosphate of ATP to the 4'-position of a tetraacyldisaccharide 1-phosphate intermediate (termed DS-1-P) to form tetraacyldisaccharide 1,4'-bis-phosphate (lipid IVA). The chain is Tetraacyldisaccharide 4'-kinase from Brucella ovis (strain ATCC 25840 / 63/290 / NCTC 10512).